The sequence spans 478 residues: Probable serine carboxypeptidase CPVL (478 aa).

The N-terminal stretch at 1–22 (MVRAKWKMVVSLILFMVSPGDG) is a signal peptide. Asparagine 83 and asparagine 134 each carry an N-linked (GlcNAc...) asparagine glycan. The active site involves serine 206. 2 N-linked (GlcNAc...) asparagine glycosylation sites follow: asparagine 309 and asparagine 350. Catalysis depends on residues aspartate 390 and histidine 450.

This sequence belongs to the peptidase S10 family.

May be involved in the digestion of phagocytosed particles in the lysosome, participation in an inflammatory protease cascade, and trimming of peptides for antigen presentation. This is Probable serine carboxypeptidase CPVL (Cpvl) from Mus musculus (Mouse).